A 152-amino-acid chain; its full sequence is uncharacterized protein (152 aa).

This is an uncharacterized protein from Mycobacterium tuberculosis (strain ATCC 25618 / H37Rv).